The following is a 144-amino-acid chain: MGASKVKQDMPPPGGYGPIDYKRNLPRRGLSGYSMLAIGIGTLIYGHWSIMKWNRERRRLQIEDFEARIALLPLLQAETDRRTLQMLRENLEEEAIIMKDVPDWKVGESVFHTTRWVPPLIGELYGLRTTEEALHASHGFMWYT.

The helical transmembrane segment at 30–51 (LSGYSMLAIGIGTLIYGHWSIM) threads the bilayer.

This sequence belongs to the complex I NDUFA13 subunit family. Complex I is composed of 45 different subunits. Interacts with CARD15, but not with CARD4. Interacts with STAT3, but not with STAT1, STAT2 and STAT5A. Interacts with OLFM4.

The protein resides in the mitochondrion inner membrane. The protein localises to the nucleus. Its function is as follows. Accessory subunit of the mitochondrial membrane respiratory chain NADH dehydrogenase (Complex I), that is believed not to be involved in catalysis. Complex I functions in the transfer of electrons from NADH to the respiratory chain. The immediate electron acceptor for the enzyme is believed to be ubiquinone. Involved in the interferon/all-trans-retinoic acid (IFN/RA) induced cell death. This apoptotic activity is inhibited by interaction with viral IRF1. Prevents the transactivation of STAT3 target genes. May play a role in CARD15-mediated innate mucosal responses and serve to regulate intestinal epithelial cell responses to microbes. In Gorilla gorilla gorilla (Western lowland gorilla), this protein is NADH dehydrogenase [ubiquinone] 1 alpha subcomplex subunit 13 (NDUFA13).